The sequence spans 297 residues: Alarmin release inhibitor (297 aa).

N-linked (GlcNAc...) asparagine glycans are attached at residues Asn107, Asn175, and Asn190. In terms of domain architecture, Sushi spans 151 to 211; sequence TYDPTPNTPT…WVPTLGVCPK (61 aa). Cysteines 183 and 209 form a disulfide.

Interacts with mouse IL33 (in reduced form).

It localises to the secreted. The protein resides in the host nucleus. Secreted protein which suppresses the host allergic response by inhibiting the interaction of host IL33 with its receptor in order to maintain parasitic infection. Binds to both host IL33 and host nuclear DNA and this dual binding blocks the interaction of IL33 with its receptor, and tethers IL33 within necrotic cells, preventing its release, and blocking allergic response initiation. The polypeptide is Alarmin release inhibitor (Heligmosomoides polygyrus (Parasitic roundworm)).